A 190-amino-acid chain; its full sequence is Ganglioside GM2 activator (190 aa).

The first 23 residues, 1 to 23 (MQSLMQAPVLIALGLLFAAPAQA), serve as a signal peptide directing secretion. 4 disulfide bridges follow: cysteine 36/cysteine 180, cysteine 96/cysteine 103, cysteine 109/cysteine 135, and cysteine 122/cysteine 133. Asparagine 60 is a glycosylation site (N-linked (GlcNAc...) asparagine).

It is found in the lysosome. The catalysed reaction is cholesterol(in) = cholesterol(out). Its function is as follows. The large binding pocket can accommodate several single chain phospholipids and fatty acids, GM2A also exhibits some calcium-independent phospholipase activity. Binds gangliosides and stimulates ganglioside GM2 degradation. It stimulates only the breakdown of ganglioside GM2 and glycolipid GA2 by beta-hexosaminidase A. It extracts single GM2 molecules from membranes and presents them in soluble form to beta-hexosaminidase A for cleavage of N-acetyl-D-galactosamine and conversion to GM3. Has cholesterol transfer activity. The polypeptide is Ganglioside GM2 activator (GM2A) (Macaca fascicularis (Crab-eating macaque)).